The primary structure comprises 394 residues: Phosphoglycerate kinase (394 aa).

Residues 21–23, Arg-36, 59–62, Arg-118, and Arg-151 each bind substrate; these read DFN and HLGR. A Phosphoserine modification is found at Ser-183. ATP-binding residues include Lys-201 and Gly-292. Thr-299 carries the post-translational modification Phosphothreonine. ATP contacts are provided by residues Glu-323 and 350–353; that span reads GGDS.

It belongs to the phosphoglycerate kinase family. As to quaternary structure, monomer.

The protein resides in the cytoplasm. It catalyses the reaction (2R)-3-phosphoglycerate + ATP = (2R)-3-phospho-glyceroyl phosphate + ADP. It participates in carbohydrate degradation; glycolysis; pyruvate from D-glyceraldehyde 3-phosphate: step 2/5. This Bacillus mycoides (strain KBAB4) (Bacillus weihenstephanensis) protein is Phosphoglycerate kinase.